Here is a 247-residue protein sequence, read N- to C-terminus: Type III pantothenate kinase (247 aa).

6–13 (DVGNTHTT) contributes to the ATP binding site. 101 to 104 (GADR) contributes to the substrate binding site. The Proton acceptor role is filled by Asp103. Asp123 contacts K(+). Thr126 lines the ATP pocket. Substrate is bound at residue Thr177.

The protein belongs to the type III pantothenate kinase family. Homodimer. NH4(+) serves as cofactor. K(+) is required as a cofactor.

It localises to the cytoplasm. It catalyses the reaction (R)-pantothenate + ATP = (R)-4'-phosphopantothenate + ADP + H(+). Its pathway is cofactor biosynthesis; coenzyme A biosynthesis; CoA from (R)-pantothenate: step 1/5. In terms of biological role, catalyzes the phosphorylation of pantothenate (Pan), the first step in CoA biosynthesis. The polypeptide is Type III pantothenate kinase (Thermosipho melanesiensis (strain DSM 12029 / CIP 104789 / BI429)).